The following is a 440-amino-acid chain: 3-phosphoshikimate 1-carboxyvinyltransferase (440 aa).

Positions 31, 32, and 36 each coordinate 3-phosphoshikimate. Lys31 contributes to the phosphoenolpyruvate binding site. Gly104 and Arg133 together coordinate phosphoenolpyruvate. 4 residues coordinate 3-phosphoshikimate: Ser178, Gln180, Asp328, and Lys355. Gln180 serves as a coordination point for phosphoenolpyruvate. Asp328 (proton acceptor) is an active-site residue. Residues Arg359 and Arg401 each coordinate phosphoenolpyruvate.

The protein belongs to the EPSP synthase family. In terms of assembly, monomer.

The protein localises to the cytoplasm. The enzyme catalyses 3-phosphoshikimate + phosphoenolpyruvate = 5-O-(1-carboxyvinyl)-3-phosphoshikimate + phosphate. Its pathway is metabolic intermediate biosynthesis; chorismate biosynthesis; chorismate from D-erythrose 4-phosphate and phosphoenolpyruvate: step 6/7. Its function is as follows. Catalyzes the transfer of the enolpyruvyl moiety of phosphoenolpyruvate (PEP) to the 5-hydroxyl of shikimate-3-phosphate (S3P) to produce enolpyruvyl shikimate-3-phosphate and inorganic phosphate. This is 3-phosphoshikimate 1-carboxyvinyltransferase from Thermosynechococcus vestitus (strain NIES-2133 / IAM M-273 / BP-1).